We begin with the raw amino-acid sequence, 88 residues long: Small ribosomal subunit protein bS20 (88 aa).

This sequence belongs to the bacterial ribosomal protein bS20 family.

In terms of biological role, binds directly to 16S ribosomal RNA. This is Small ribosomal subunit protein bS20 from Bartonella henselae (strain ATCC 49882 / DSM 28221 / CCUG 30454 / Houston 1) (Rochalimaea henselae).